We begin with the raw amino-acid sequence, 293 residues long: Elongation factor Ts (293 aa).

The tract at residues 80-83 (TDFV) is involved in Mg(2+) ion dislocation from EF-Tu.

It belongs to the EF-Ts family.

The protein localises to the cytoplasm. Associates with the EF-Tu.GDP complex and induces the exchange of GDP to GTP. It remains bound to the aminoacyl-tRNA.EF-Tu.GTP complex up to the GTP hydrolysis stage on the ribosome. This Staphylococcus aureus (strain Newman) protein is Elongation factor Ts.